A 1024-amino-acid polypeptide reads, in one-letter code: Protein sumv-1 (1024 aa).

Disordered stretches follow at residues 447–486 (DASQ…KKMP), 501–564 (NFQG…RRGV), 577–617 (PSRH…RSQA), 645–664 (SQMA…GSPQ), 710–739 (VRSG…DTVQ), and 773–1024 (AGNS…EEEL). Polar residues-rich tracts occupy residues 467–486 (SFGT…KKMP), 501–514 (NFQG…SSAT), and 528–542 (RSQQ…QTQD). Positions 584–600 (SPLTPSTSTSSSQLLAP) are enriched in low complexity. Over residues 605-617 (QPGTSSQTFRSQA) the composition is skewed to polar residues. Composition is skewed to low complexity over residues 710 to 730 (VRSG…ASGS) and 784 to 809 (AGAP…ASTS). Positions 810 to 832 (VPEPTKSSESSVDPQSDVSFSNP) are enriched in polar residues. Over residues 859-870 (TLASESTSSEAT) the composition is skewed to low complexity. Positions 873–883 (HDTTSSSSAET) are enriched in polar residues. Residues 903–914 (PEKEKEKIDRPK) show a composition bias toward basic and acidic residues. Composition is skewed to low complexity over residues 916–943 (PKSS…NQAI), 952–962 (SASTSSSAAST), and 970–986 (LLAE…QQQA). Positions 987 to 998 (IGSTSKNGGSTK) are enriched in polar residues.

The protein localises to the nucleus. It is found in the cytoplasm. Its subcellular location is the cell projection. It localises to the axon. Nuclear factor that influences the activity of genes involved in vulval development. This Caenorhabditis elegans protein is Protein sumv-1.